The primary structure comprises 207 residues: LexA repressor (207 aa).

Positions 28–48 (RAEIARELGFRSANAAEEHLK) form a DNA-binding region, H-T-H motif. Catalysis depends on for autocatalytic cleavage activity residues Ser124 and Lys161.

The protein belongs to the peptidase S24 family. Homodimer.

It carries out the reaction Hydrolysis of Ala-|-Gly bond in repressor LexA.. In terms of biological role, represses a number of genes involved in the response to DNA damage (SOS response), including recA and lexA. In the presence of single-stranded DNA, RecA interacts with LexA causing an autocatalytic cleavage which disrupts the DNA-binding part of LexA, leading to derepression of the SOS regulon and eventually DNA repair. This Aliivibrio salmonicida (strain LFI1238) (Vibrio salmonicida (strain LFI1238)) protein is LexA repressor.